We begin with the raw amino-acid sequence, 242 residues long: HTH-type transcriptional regulator GadW (242 aa).

The 98-residue stretch at 139–236 folds into the HTH araC/xylS-type domain; that stretch reads GKVERLISFD…GVTPHQFAQH (98 aa). 2 consecutive DNA-binding regions (H-T-H motif) follow at residues 156–177 and 203–226; these read RDIA…QDEN and LHTI…RQYY.

Homodimer.

Functionally, depending on the conditions (growth phase and medium), acts as a positive or negative regulator of gadA and gadBC. Repression occurs directly or via the repression of the expression of gadX. Activation occurs directly by the binding of GadW to the gadA and gadBC promoters. The sequence is that of HTH-type transcriptional regulator GadW (gadW) from Escherichia coli (strain K12).